A 145-amino-acid chain; its full sequence is uncharacterized protein (145 aa).

The chain crosses the membrane as a helical span at residues M1–L21. Residues T109–K145 are disordered. Basic and acidic residues predominate over residues A119–D138.

It localises to the membrane. This is an uncharacterized protein from Rhizobium meliloti (strain 1021) (Ensifer meliloti).